A 303-amino-acid polypeptide reads, in one-letter code: MYSKYPAFFLNKNIKSSSGVQFSNVVKIPSAIESLYRGDNNLTGIIFLLPTLITGVFCQNFPEVVDIEQIRLHKLTNLSNDFHMVSMSEDPQIALDWGNGCFITIDPVSFSDYIVDVHATFSENQLNLPGRMEREKEHVALAVPFCSIKKITIHNKELANPFYLSIPQENHEAKMELNTLYGELISLLRKKYTQEVDEKEEQIALRTYAIRYLDFYAKFCGCDNPFDKTIAQLSELYPEFMSNFLQSSHFSSKTGLMKEIVVNSLDNLFKEHPYTKSIDASYIYRVKESTTCYEDDWAKPVYD.

Its subcellular location is the secreted. It carries out the reaction L-arginyl-[protein] + NAD(+) = N(omega)-(ADP-D-ribosyl)-L-arginyl-[protein] + nicotinamide + H(+). Functionally, ADP-ribosyltransferase that targets a specific class of NAD(+)-dependent glutamate dehydrogenase (GDH) enzymes found in fungi and protists, including many natural hosts of Legionella. Acts by targeting a conserved arginine residue in the NAD(+)-binding pocket of GDH, thereby blocking oxidative deamination of glutamate. Lart1 may target amoeba GDH to prevent a conserved stress response. In vitro, acts on Glud2 from the amoeba Dictyostelium discoideum (DdGluD2) and yeast Gdh2p but does not act on human or Legionella GDH homologs. The polypeptide is NAD(+)--arginine ADP-ribosyltransferase Lart1 (Legionella pneumophila subsp. pneumophila (strain Philadelphia 1 / ATCC 33152 / DSM 7513)).